The chain runs to 305 residues: Acyl transferase (305 aa).

Catalysis depends on charge relay system residues Ser-116, Asp-213, and His-243.

Belongs to the LuxD family.

Its pathway is lipid metabolism; fatty acid reduction for biolumincescence. Functionally, acyl transferase is part of the fatty acid reductase system required for aldehyde biosynthesis; it produces fatty acids for the luminescent reaction. This Photobacterium leiognathi protein is Acyl transferase.